The sequence spans 1435 residues: Nitric oxide synthase 1 (1435 aa).

An interaction with NOSIP region spans residues 1 to 206 (MEEHVFGVQQ…LQGSGDKNEL (206 aa)). The PDZ domain occupies 17 to 99 (SVRLFKRKVG…ETHVVLILRG (83 aa)). Disordered regions lie at residues 110–201 (TFTG…QGSG) and 277–304 (NNPY…SKCP). Residues 164-246 (QGHGQEAGSP…TGVQVDRDFD (83 aa)) form an interaction with DYNLL1/PIN region. The span at 290-300 (GKQSPTKNGSP) shows a compositional bias: polar residues. A (6R)-L-erythro-5,6,7,8-tetrahydrobiopterin-binding site is contributed by Ser340. Cys421 is a heme b binding site. Residues Gln484, Trp593, Tyr594, and Glu598 each contribute to the L-arginine site. Positions 683, 684, and 697 each coordinate (6R)-L-erythro-5,6,7,8-tetrahydrobiopterin. Tyr712 is a binding site for heme b. A calmodulin-binding region spans residues 731–751 (KRRAIGFKKLAEAVKFSAKLM). In terms of domain architecture, Flavodoxin-like spans 761–941 (ATILYATETG…AFRTWAKKVF (181 aa)). Residues Thr767, Glu768, Thr769, Lys771, Ser772, Ser813, Thr814, and Gly818 each coordinate FMN. Ser853, Ser863, and Ser864 each carry phosphoserine. Ser892, His897, Cys899, Glu925, and Gln929 together coordinate FMN. In terms of domain architecture, FAD-binding FR-type spans 996–1243 (KRVSAARLLS…VRGAPSFRLP (248 aa)). Arg1016 contributes to the NADP(+) binding site. FAD-binding residues include His1038, Arg1179, Tyr1180, Tyr1181, Ser1182, Thr1197, and Ala1199. Ser1202 contacts NADP(+). Residues Tyr1203, Val1216, Cys1217, and Ser1218 each coordinate FAD. 10 residues coordinate NADP(+): Thr1257, Arg1290, Ser1319, Arg1320, Lys1326, Tyr1328, Gln1330, Asp1363, Thr1404, and Arg1406.

Belongs to the NOS family. As to quaternary structure, homodimer. Interacts with DLG4; the interaction possibly being prevented by the association between NOS1 and CAPON. Forms a ternary complex with CAPON and RASD1. Forms a ternary complex with CAPON and SYN1. Interacts with ZDHHC23. Interacts with NOSIP; which may impair its synaptic location. Interacts with HTR4. Interacts with SLC6A4. Interacts with VAC14. Interacts (via N-terminal domain) with DLG4 (via N-terminal tandem pair of PDZ domains). Interacts with SLC6A4. Forms a complex with ASL, ASS1 and SLC7A1; the complex regulates cell-autonomous L-arginine synthesis and citrulline recycling while channeling extracellular L-arginine to nitric oxide synthesis pathway. Interacts with DMD; localizes NOS1 to sarcolemma in muscle cells. Interacts with DYNLL1; inhibits the nitric oxide synthase activity. Requires heme b as cofactor. It depends on FAD as a cofactor. FMN serves as cofactor. (6R)-L-erythro-5,6,7,8-tetrahydrobiopterin is required as a cofactor. Post-translationally, ubiquitinated; mediated by STUB1/CHIP in the presence of Hsp70 and Hsp40 (in vitro).

The protein localises to the cell membrane. The protein resides in the sarcolemma. It localises to the cell projection. It is found in the dendritic spine. It catalyses the reaction 2 L-arginine + 3 NADPH + 4 O2 + H(+) = 2 L-citrulline + 2 nitric oxide + 3 NADP(+) + 4 H2O. Its activity is regulated as follows. Stimulated by calcium/calmodulin. Inhibited by DYNLL1 that prevents the dimerization of the protein. Inhibited by NOSIP. Functionally, produces nitric oxide (NO) which is a messenger molecule with diverse functions throughout the body. In the brain and peripheral nervous system, NO displays many properties of a neurotransmitter. Probably has nitrosylase activity and mediates cysteine S-nitrosylation of cytoplasmic target proteins such SRR. This Oryctolagus cuniculus (Rabbit) protein is Nitric oxide synthase 1 (NOS1).